The primary structure comprises 70 residues: Large ribosomal subunit protein bL32c (70 aa).

Disordered stretches follow at residues 1-20 and 51-70; these read MAVPKKRTSRSKKKIRKNVR and NDDSSGSSESKLTAIDLDDP. Residues 52-61 show a composition bias toward polar residues; sequence DDSSGSSESK.

This sequence belongs to the bacterial ribosomal protein bL32 family.

The protein localises to the plastid. It localises to the chloroplast. The protein is Large ribosomal subunit protein bL32c (rpl32) of Pinus thunbergii (Japanese black pine).